Consider the following 1551-residue polypeptide: Pentafunctional AROM polypeptide 1 (1551 aa).

A 3-dehydroquinate synthase region spans residues 1-379 (MSIEKVSILG…YESKAHQIFK (379 aa)). NAD(+) contacts are provided by residues 42-44 (DTN), 80-83 (ENHK), 111-113 (GGV), and D116. R127 is a 7-phospho-2-dehydro-3-deoxy-D-arabino-heptonate binding site. 136 to 137 (TT) serves as a coordination point for NAD(+). D143 and K149 together coordinate 7-phospho-2-dehydro-3-deoxy-D-arabino-heptonate. Residue K158 coordinates NAD(+). N159 lines the 7-phospho-2-dehydro-3-deoxy-D-arabino-heptonate pocket. NAD(+)-binding positions include 176-179 (FLQT) and N187. Zn(2+) is bound at residue E191. Residues 191 to 194 (EVVK) and K243 each bind 7-phospho-2-dehydro-3-deoxy-D-arabino-heptonate. The active-site Proton acceptor; for 3-dehydroquinate synthase activity is the E253. 7-phospho-2-dehydro-3-deoxy-D-arabino-heptonate contacts are provided by residues 257–261 (RNLLN) and H264. H264 is a Zn(2+) binding site. H268 acts as the Proton acceptor; for 3-dehydroquinate synthase activity in catalysis. 7-phospho-2-dehydro-3-deoxy-D-arabino-heptonate contacts are provided by H280 and K351. H280 contributes to the Zn(2+) binding site. Residues 392–835 (VHPFANRHPE…WDVLHSKFNA (444 aa)) are EPSP synthase. Residues 854 to 1044 (DRSIVIIGMR…LPATRSTFVT (191 aa)) are shikimate kinase. 861-868 (GMRAAGKT) serves as a coordination point for ATP. The tract at residues 1045-1258 (LTYPDLRKVP…IGVGQLSLKE (214 aa)) is 3-dehydroquinase. H1162 acts as the Proton acceptor; for 3-dehydroquinate dehydratase activity in catalysis. The Schiff-base intermediate with substrate; for 3-dehydroquinate dehydratase activity role is filled by K1191. A shikimate dehydrogenase region spans residues 1271-1551 (EKEFWVVGSP…KVIHSAVLNE (281 aa)).

In the N-terminal section; belongs to the sugar phosphate cyclases superfamily. Dehydroquinate synthase family. The protein in the 2nd section; belongs to the EPSP synthase family. It in the 3rd section; belongs to the shikimate kinase family. This sequence in the 4th section; belongs to the type-I 3-dehydroquinase family. In the C-terminal section; belongs to the shikimate dehydrogenase family. In terms of assembly, homodimer. It depends on Zn(2+) as a cofactor.

It is found in the cytoplasm. It carries out the reaction 7-phospho-2-dehydro-3-deoxy-D-arabino-heptonate = 3-dehydroquinate + phosphate. The enzyme catalyses 3-dehydroquinate = 3-dehydroshikimate + H2O. It catalyses the reaction shikimate + NADP(+) = 3-dehydroshikimate + NADPH + H(+). The catalysed reaction is shikimate + ATP = 3-phosphoshikimate + ADP + H(+). It carries out the reaction 3-phosphoshikimate + phosphoenolpyruvate = 5-O-(1-carboxyvinyl)-3-phosphoshikimate + phosphate. It functions in the pathway metabolic intermediate biosynthesis; chorismate biosynthesis; chorismate from D-erythrose 4-phosphate and phosphoenolpyruvate: step 2/7. It participates in metabolic intermediate biosynthesis; chorismate biosynthesis; chorismate from D-erythrose 4-phosphate and phosphoenolpyruvate: step 3/7. Its pathway is metabolic intermediate biosynthesis; chorismate biosynthesis; chorismate from D-erythrose 4-phosphate and phosphoenolpyruvate: step 4/7. The protein operates within metabolic intermediate biosynthesis; chorismate biosynthesis; chorismate from D-erythrose 4-phosphate and phosphoenolpyruvate: step 5/7. It functions in the pathway metabolic intermediate biosynthesis; chorismate biosynthesis; chorismate from D-erythrose 4-phosphate and phosphoenolpyruvate: step 6/7. The AROM polypeptide catalyzes 5 consecutive enzymatic reactions in prechorismate polyaromatic amino acid biosynthesis. The sequence is that of Pentafunctional AROM polypeptide 1 from Lodderomyces elongisporus (strain ATCC 11503 / CBS 2605 / JCM 1781 / NBRC 1676 / NRRL YB-4239) (Yeast).